We begin with the raw amino-acid sequence, 400 residues long: Sphingosine 1-phosphate receptor 5 (400 aa).

Residues 1 to 41 (MEPGLLRPAPVSEVIVLHYNYTGKLRGARYQPGAGLRADAA) are Extracellular-facing. An N-linked (GlcNAc...) asparagine glycan is attached at Asn20. Residues 42 to 62 (VCLAVCAFIVLENLAVLLVLV) form a helical membrane-spanning segment. Residues 63 to 68 (RHPRFH) lie on the Cytoplasmic side of the membrane. A helical transmembrane segment spans residues 69 to 89 (APMFLLLGSLTLSDLLAGAAY). Over 90–111 (ATNILLSGPLTLRLSPALWFAR) the chain is Extracellular. Residues 112-132 (EGGVFVALAASVLSLLAIALE) form a helical membrane-spanning segment. The Cytoplasmic portion of the chain corresponds to 133–151 (RHLTMARRGPAPAASRART). Residues 152–172 (LAMAVAAWGASLLLGLLPALG) traverse the membrane as a helical segment. Topologically, residues 173–192 (WNCLGRLETCSTVLPLYAKA) are extracellular. The chain crosses the membrane as a helical span at residues 193 to 213 (YVLFCVLAFLGILAAICALYA). Over 214–253 (RIYCQVRANARRLRAGPGSRRATSSSRSRHTPRSLALLRT) the chain is Cytoplasmic. Residues 254-274 (LSVVLLAFVACWGPLFLLLLL) traverse the membrane as a helical segment. At 275 to 288 (DVACPARACPVLLQ) the chain is on the extracellular side. The helical transmembrane segment at 289–309 (ADPFLGLAMANSLLNPIIYTF) threads the bilayer. The Cytoplasmic segment spans residues 310–400 (TNRDLRHALL…NRSLVPTATD (91 aa)). The S-palmitoyl cysteine moiety is linked to residue Cys324. A disordered region spans residues 331–400 (QDSSNSLQRS…NRSLVPTATD (70 aa)). Phosphoserine occurs at positions 340, 342, and 384. Over residues 360 to 400 (DRSSSPSEHLSPQQDGVDTSCSTGSPGVATANRSLVPTATD) the composition is skewed to polar residues.

It belongs to the G-protein coupled receptor 1 family. In terms of tissue distribution, expressed in spleen and brain. In the CNS expression is restricted to oligodendrocytes.

It is found in the cell membrane. In terms of biological role, receptor for the lysosphingolipid sphingosine 1-phosphate (S1P). S1P is a bioactive lysophospholipid that elicits diverse physiological effect on most types of cells and tissues. Is coupled to both the G(i/0)alpha and G(12) subclass of heteromeric G-proteins. S1P activation on oligodendroglial cells modulates two distinct functional pathways mediating either process retraction or cell survival. S1P activation on O4-positive pre-oligodendrocytes induces process retraction via a Rho kinase/collapsin response-mediated protein signaling pathway. The S1P-induced survival of mature oligodendrocytes is mediated through a pertussis toxin-sensitive, Akt-dependent pathway. S1P activation on oligodendroglial cells modulates two distinct functional pathways mediating either process retraction or cell survival. These effects depend on the developmental stage of the cell. This chain is Sphingosine 1-phosphate receptor 5 (S1pr5), found in Mus musculus (Mouse).